We begin with the raw amino-acid sequence, 545 residues long: Prolyl 3-hydroxylase OGFOD1 (545 aa).

The disordered stretch occupies residues 1 to 23 (MNGKRPADPGPARPMKKGKKQVS). Residues 137–239 (PTIDMSCAKY…RLSISGWFYG (103 aa)) form the Fe2OG dioxygenase domain. Fe cation-binding residues include H155 and D157. Residue Y169 coordinates 2-oxoglutarate. H218 provides a ligand contact to Fe cation. R230 provides a ligand contact to 2-oxoglutarate. Over residues 371–380 (SEDDETEEKG) the composition is skewed to acidic residues. The tract at residues 371 to 437 (SEDDETEEKG…EAKKESSVPM (67 aa)) is disordered. Residues 383–393 (ETASAAAGTEE) show a composition bias toward low complexity. The segment covering 402-417 (PENNQVAAGSHSQENG) has biased composition (polar residues).

The protein belongs to the TPA1 family. Monomer. Requires Fe(2+) as cofactor. L-ascorbate serves as cofactor.

The protein resides in the cytoplasm. It localises to the nucleus. The enzyme catalyses [ribosomal protein uS12]-L-proline + 2-oxoglutarate + O2 = [ribosomal protein uS12]-(3S)-3-hydroxy-L-proline + succinate + CO2. Functionally, prolyl 3-hydroxylase that catalyzes 3-hydroxylation of 'Pro-62' of small ribosomal subunit uS12 (RPS23), thereby regulating protein translation termination efficiency. Involved in stress granule formation. This is Prolyl 3-hydroxylase OGFOD1 (Ogfod1) from Mus musculus (Mouse).